Consider the following 480-residue polypeptide: Aspartyl/glutamyl-tRNA(Asn/Gln) amidotransferase subunit B (480 aa).

This sequence belongs to the GatB/GatE family. GatB subfamily. Heterotrimer of A, B and C subunits.

It carries out the reaction L-glutamyl-tRNA(Gln) + L-glutamine + ATP + H2O = L-glutaminyl-tRNA(Gln) + L-glutamate + ADP + phosphate + H(+). The catalysed reaction is L-aspartyl-tRNA(Asn) + L-glutamine + ATP + H2O = L-asparaginyl-tRNA(Asn) + L-glutamate + ADP + phosphate + 2 H(+). Its function is as follows. Allows the formation of correctly charged Asn-tRNA(Asn) or Gln-tRNA(Gln) through the transamidation of misacylated Asp-tRNA(Asn) or Glu-tRNA(Gln) in organisms which lack either or both of asparaginyl-tRNA or glutaminyl-tRNA synthetases. The reaction takes place in the presence of glutamine and ATP through an activated phospho-Asp-tRNA(Asn) or phospho-Glu-tRNA(Gln). The sequence is that of Aspartyl/glutamyl-tRNA(Asn/Gln) amidotransferase subunit B from Streptococcus pneumoniae serotype 4 (strain ATCC BAA-334 / TIGR4).